The following is a 407-amino-acid chain: Peptidase T (407 aa).

Position 82 (His-82) interacts with Zn(2+). The active site involves Asp-84. Asp-143 is a binding site for Zn(2+). The active-site Proton acceptor is the Glu-177. Zn(2+)-binding residues include Glu-178, Asp-200, and His-382.

This sequence belongs to the peptidase M20B family. Zn(2+) serves as cofactor.

Its subcellular location is the cytoplasm. The enzyme catalyses Release of the N-terminal residue from a tripeptide.. Its function is as follows. Cleaves the N-terminal amino acid of tripeptides. The chain is Peptidase T from Streptococcus pyogenes serotype M49 (strain NZ131).